The chain runs to 493 residues: Ferruginol synthase 1 (493 aa).

A helical transmembrane segment spans residues 2–22 (DSFPLLAALFFILAATWFISF). Residue cysteine 437 coordinates heme.

It belongs to the cytochrome P450 family. It depends on heme as a cofactor. Expressed in leaf glandular trichomes.

It localises to the membrane. It catalyses the reaction abieta-8,11,13-triene + reduced [NADPH--hemoprotein reductase] + O2 = ferruginol + oxidized [NADPH--hemoprotein reductase] + H2O + H(+). It carries out the reaction ferruginol + reduced [NADPH--hemoprotein reductase] + O2 = 11-hydroxyferruginol + oxidized [NADPH--hemoprotein reductase] + H2O + H(+). The enzyme catalyses miltiradiene + 2 reduced [NADPH--hemoprotein reductase] + 2 O2 = 11-oxomiltiradiene + 2 oxidized [NADPH--hemoprotein reductase] + 3 H2O + 2 H(+). Its pathway is secondary metabolite biosynthesis; terpenoid biosynthesis. Functionally, monooxygenase involved in the biosynthesis of labdane-related diterpenes natural products. Catalyzes the oxidation of abietatriene to produce ferruginol. Catalyzes the oxidation of ferruginol at C-12 to produce 11-hydroxyferruginol. Ferruginol and 11-hydroxyferruginol are intermediates in the biosynthesis of carnosate, a potent antioxidant. May also convert miltiradiene into 11-oxomiltiradiene. The polypeptide is Ferruginol synthase 1 (Rosmarinus officinalis (Rosemary)).